The primary structure comprises 510 residues: Probable malate:quinone oxidoreductase (510 aa).

The protein belongs to the MQO family. Requires FAD as cofactor.

It catalyses the reaction (S)-malate + a quinone = a quinol + oxaloacetate. The protein operates within carbohydrate metabolism; tricarboxylic acid cycle; oxaloacetate from (S)-malate (quinone route): step 1/1. The polypeptide is Probable malate:quinone oxidoreductase (Wigglesworthia glossinidia brevipalpis).